A 330-amino-acid polypeptide reads, in one-letter code: Cyclin-dependent kinase 7 (330 aa).

One can recognise a Protein kinase domain in the interval 5-289 (YDTIKHLGEG…CTQSLQMEYF (285 aa)). ATP is bound by residues 11–19 (LGEGQFANV) and Lys34. Asp130 acts as the Proton acceptor in catalysis. Residue Thr163 is modified to Phosphothreonine. Positions 305-330 (KKQQPQKRSRRLDDDGTRPVRRLNFD) are disordered. The segment covering 315–330 (RLDDDGTRPVRRLNFD) has biased composition (basic and acidic residues).

The protein belongs to the protein kinase superfamily. CMGC Ser/Thr protein kinase family. CDC2/CDKX subfamily. Catalytic component which, in association with cyclin H (cyh-1) and mat1, is likely to form the CAK complex.

The enzyme catalyses L-seryl-[protein] + ATP = O-phospho-L-seryl-[protein] + ADP + H(+). It carries out the reaction L-threonyl-[protein] + ATP = O-phospho-L-threonyl-[protein] + ADP + H(+). The catalysed reaction is [DNA-directed RNA polymerase] + ATP = phospho-[DNA-directed RNA polymerase] + ADP + H(+). Functionally, serine/threonine kinase involved in cell cycle control and in RNA polymerase II-mediated RNA transcription. Required for maintaining chromosome ploidy. May phosphorylate the large subunit of RNA polymerase II, ama-1. The polypeptide is Cyclin-dependent kinase 7 (Caenorhabditis elegans).